Reading from the N-terminus, the 141-residue chain is Ubiquitin-like protein ATG12 (141 aa).

Positions 24–54 (LELSPETAIPEPPSSVAVSPGTEEPPGDTKK) are disordered. A Glycyl lysine isopeptide (Gly-Lys) (interchain with K-? in acceptor protein) cross-link involves residue G141.

Belongs to the ATG12 family. In terms of assembly, forms a conjugate with ATG5. Part of the minor complex composed of 4 sets of ATG12-ATG5 and ATG16L1 (400 kDa); this complex interacts with ATG3 leading to disruption of ATG7 interaction and promotion of ATG8-like proteins lipidation. Forms an 800-kDa complex composed of ATG12-ATG5 and ATG16L2. Interacts with DHX58/RIG-1, IFIH1/MDA5 and MAVS/IPS-1 in monomeric form as well as in ATG12-ATG5 conjugate. The interaction with MAVS is further enhanced upon vesicular stomatitis virus (VSV) infection. Interacts with ATG3; this interaction is essential for phosphatidylethanolamine (PE)-conjugated ATG8-like proteins formation. Interacts with ATG7. Interacts with ATG10. The ATG12-ATG5 conjugate interacts with RAB33A; this interaction is bridged by ATG16L1 and promotes ATG12-ATG5-ATG16L1 complex recruitment to phagophores. Interacts with TECPR1. Interacts with SH3BGRL. The ATG12-ATG5 conjugate interacts with PDCD6IP (via the BRO1 domain); this interaction is bridged by ATG12 and promotes multiple PDCD6IP-mediated functions such as endolysosomal trafficking, macroautophagy and exosome biogenesis. Post-translationally, acetylated by EP300.

It localises to the cytoplasm. The protein resides in the preautophagosomal structure membrane. Its function is as follows. Ubiquitin-like protein involved in autophagy vesicles formation. Conjugation with ATG5 through a ubiquitin-like conjugating system involving also ATG7 as an E1-like activating enzyme and ATG10 as an E2-like conjugating enzyme, is essential for its function. The ATG12-ATG5 conjugate acts as an E3-like enzyme which is required for lipidation of ATG8 family proteins and their association to the vesicle membranes. The ATG12-ATG5 conjugate also negatively regulates the innate antiviral immune response by blocking the type I IFN production pathway through direct association with RARRES3 and MAVS. Also plays a role in translation or delivery of incoming viral RNA to the translation apparatus. As part of the ATG8 conjugation system with ATG5 and ATG16L1, required for recruitment of LRRK2 to stressed lysosomes and induction of LRRK2 kinase activity in response to lysosomal stress. This is Ubiquitin-like protein ATG12 from Rattus norvegicus (Rat).